The sequence spans 72 residues: Large ribosomal subunit protein bL31 (72 aa).

Zn(2+)-binding residues include cysteine 16, cysteine 18, cysteine 37, and cysteine 40.

This sequence belongs to the bacterial ribosomal protein bL31 family. Type A subfamily. As to quaternary structure, part of the 50S ribosomal subunit. The cofactor is Zn(2+).

In terms of biological role, binds the 23S rRNA. In Hahella chejuensis (strain KCTC 2396), this protein is Large ribosomal subunit protein bL31.